A 450-amino-acid polypeptide reads, in one-letter code: ATP-dependent protease ATPase subunit HslU (450 aa).

Residues Val-29, 71 to 76 (GVGKTE), Asp-261, Glu-328, and Arg-400 contribute to the ATP site.

It belongs to the ClpX chaperone family. HslU subfamily. In terms of assembly, a double ring-shaped homohexamer of HslV is capped on each side by a ring-shaped HslU homohexamer. The assembly of the HslU/HslV complex is dependent on binding of ATP.

It localises to the cytoplasm. In terms of biological role, ATPase subunit of a proteasome-like degradation complex; this subunit has chaperone activity. The binding of ATP and its subsequent hydrolysis by HslU are essential for unfolding of protein substrates subsequently hydrolyzed by HslV. HslU recognizes the N-terminal part of its protein substrates and unfolds these before they are guided to HslV for hydrolysis. In Rickettsia akari (strain Hartford), this protein is ATP-dependent protease ATPase subunit HslU.